A 351-amino-acid polypeptide reads, in one-letter code: D-alanine--D-alanine ligase (351 aa).

Positions N135–E343 constitute an ATP-grasp domain. Position 167-222 (L167–S222) interacts with ATP. Mg(2+)-binding residues include D298, E310, and N312.

It belongs to the D-alanine--D-alanine ligase family. Mg(2+) is required as a cofactor. The cofactor is Mn(2+).

The protein resides in the cytoplasm. The enzyme catalyses 2 D-alanine + ATP = D-alanyl-D-alanine + ADP + phosphate + H(+). It participates in cell wall biogenesis; peptidoglycan biosynthesis. Functionally, cell wall formation. This chain is D-alanine--D-alanine ligase, found in Leptospira interrogans serogroup Icterohaemorrhagiae serovar Lai (strain 56601).